A 224-amino-acid chain; its full sequence is 7-cyano-7-deazaguanine synthase (224 aa).

Position 9–19 (9–19) interacts with ATP; the sequence is LSGGLDSATAL. Positions 188, 198, 201, and 204 each coordinate Zn(2+).

It belongs to the QueC family. Zn(2+) serves as cofactor.

It carries out the reaction 7-carboxy-7-deazaguanine + NH4(+) + ATP = 7-cyano-7-deazaguanine + ADP + phosphate + H2O + H(+). Its pathway is purine metabolism; 7-cyano-7-deazaguanine biosynthesis. Functionally, catalyzes the ATP-dependent conversion of 7-carboxy-7-deazaguanine (CDG) to 7-cyano-7-deazaguanine (preQ(0)). In Thiobacillus denitrificans (strain ATCC 25259 / T1), this protein is 7-cyano-7-deazaguanine synthase.